A 354-amino-acid polypeptide reads, in one-letter code: Polyribonucleotide 5'-hydroxyl-kinase PF0112 (354 aa).

36-43 serves as a coordination point for ATP; the sequence is GDVDTGKT.

It depends on a divalent metal cation as a cofactor.

The catalysed reaction is a 5'-end dephospho-2'-deoxyribonucleoside-DNA + ATP = a 5'-end 5'-phospho-2'-deoxyribonucleoside-DNA + ADP + H(+). It carries out the reaction a 5'-end dephospho-ribonucleoside-RNA + ATP = a 5'-end 5'-phospho-ribonucleoside-RNA + ADP + H(+). Functionally, polynucleotide kinase that can phosphorylate the 5'-hydroxyl groups of both single-stranded RNA (ssRNA) and single-stranded DNA (ssDNA). Exhibits a strong preference for ssRNA. In Pyrococcus furiosus (strain ATCC 43587 / DSM 3638 / JCM 8422 / Vc1), this protein is Polyribonucleotide 5'-hydroxyl-kinase PF0112.